The sequence spans 181 residues: METLIASLDDAPIIDKDGYEYLVHPISNGVPMLDPALLREVVVELMQTAELDVDKIVTPEAMGIHLSTALSLQTDIPLVVIRKRAYGLDGEVSLHQQTGYSESEMYINDVEAGDRVLVVDDLLSTGGTLAAICASLSDIGAEIADVVVVLRKVGPSALDDTEFEVTSLLDITVEDGEVLVH.

The protein belongs to the purine/pyrimidine phosphoribosyltransferase family. Archaeal HPRT subfamily.

May catalyze a purine salvage reaction, the substrate is unknown. This chain is HGPRTase-like protein 1, found in Halalkalicoccus jeotgali (strain DSM 18796 / CECT 7217 / JCM 14584 / KCTC 4019 / B3).